A 497-amino-acid polypeptide reads, in one-letter code: Ganglioside-induced differentiation-associated protein 2 (497 aa).

Residues 43–223 (RSPFLYNKDV…TYQKLLPLYF (181 aa)) form the Macro domain. A disordered region spans residues 252–273 (ERQIRISEKPGAPEDNQEEEDE). Positions 253 to 263 (RQIRISEKPGA) are enriched in basic and acidic residues. Serine 280 bears the Phosphoserine mark. The 149-residue stretch at 333–481 (DIASLKALYQ…FPPFVLEYDA (149 aa)) folds into the CRAL-TRIO domain.

It belongs to the GDAP2 family.

The protein is Ganglioside-induced differentiation-associated protein 2 (GDAP2) of Homo sapiens (Human).